The sequence spans 713 residues: Polyphosphate kinase (713 aa).

Residue Asn63 participates in ATP binding. 2 residues coordinate Mg(2+): Arg394 and Arg424. Catalysis depends on His454, which acts as the Phosphohistidine intermediate. Tyr487, Arg583, and His611 together coordinate ATP.

Belongs to the polyphosphate kinase 1 (PPK1) family. It depends on Mg(2+) as a cofactor. In terms of processing, an intermediate of this reaction is the autophosphorylated ppk in which a phosphate is covalently linked to a histidine residue through a N-P bond.

The enzyme catalyses [phosphate](n) + ATP = [phosphate](n+1) + ADP. Functionally, catalyzes the reversible transfer of the terminal phosphate of ATP to form a long-chain polyphosphate (polyP). This is Polyphosphate kinase from Prosthecochloris aestuarii (strain DSM 271 / SK 413).